The primary structure comprises 213 residues: Adenylate kinase (213 aa).

10–15 (GAGKGT) provides a ligand contact to ATP. The tract at residues 30–59 (STGDMFRAAMANQTEMGVLAKSYIDKGDLV) is NMP. AMP contacts are provided by residues Thr31, Arg36, 57–59 (DLV), 86–89 (GYPR), and Gln93. The interval 127–160 (GRIINKKTGETFHKIFNPPVGDYKEEDFYQREDD) is LID. Residues Arg128 and 137 to 138 (TF) contribute to the ATP site. Residues Arg157 and Arg168 each contribute to the AMP site. Residue Lys196 participates in ATP binding.

The protein belongs to the adenylate kinase family. In terms of assembly, monomer.

It is found in the cytoplasm. The enzyme catalyses AMP + ATP = 2 ADP. It participates in purine metabolism; AMP biosynthesis via salvage pathway; AMP from ADP: step 1/1. In terms of biological role, catalyzes the reversible transfer of the terminal phosphate group between ATP and AMP. Plays an important role in cellular energy homeostasis and in adenine nucleotide metabolism. This is Adenylate kinase from Streptococcus equi subsp. zooepidemicus (strain H70).